Consider the following 225-residue polypeptide: Ribonuclease HII (225 aa).

The RNase H type-2 domain maps to 35 to 225 (GLVAGVDEVG…SFRPCQISPD (191 aa)). A divalent metal cation is bound by residues aspartate 41, glutamate 42, and aspartate 137.

It belongs to the RNase HII family. The cofactor is Mn(2+). Mg(2+) serves as cofactor.

The protein localises to the cytoplasm. The enzyme catalyses Endonucleolytic cleavage to 5'-phosphomonoester.. In terms of biological role, endonuclease that specifically degrades the RNA of RNA-DNA hybrids. The chain is Ribonuclease HII from Nostoc sp. (strain PCC 7120 / SAG 25.82 / UTEX 2576).